A 163-amino-acid chain; its full sequence is Protein MATERNALLY EXPRESSED GENE 5 (163 aa).

One can recognise an RRM domain in the interval 38-117 (STLYIEGLPA…DDVNVSAPAE (80 aa)). Cystine bridges form between cysteine 140–cysteine 162 and cysteine 143–cysteine 151.

Belongs to the MEG family. As to expression, ubiquitous.

This Zea mays (Maize) protein is Protein MATERNALLY EXPRESSED GENE 5 (MEG5).